Consider the following 363-residue polypeptide: Double-strand-specific pac1 ribonuclease (363 aa).

Disordered regions lie at residues 1-35 (MGRFKRHHEGDSDSSSSASDSLSRGRRSLGHKRSS) and 92-138 (SRHD…PPLR). Residues 13-22 (DSSSSASDSL) show a composition bias toward low complexity. Over residues 24–35 (RGRRSLGHKRSS) the composition is skewed to basic residues. Ser-122 is modified (phosphoserine). In terms of domain architecture, RNase III spans 139-262 (SEKLKEQVFM…YLGALILDGQ (124 aa)). Positions 285 to 356 (RPIDKLAKSK…AMQALEVLAK (72 aa)) constitute a DRBM domain.

Requires Mg(2+) as cofactor.

It catalyses the reaction Endonucleolytic cleavage to 5'-phosphomonoester.. In terms of biological role, digests double-stranded RNA. Converts long double-stranded RNAs into short oligonucleotides, leaving 5'-phosphates on their cleavage products. Probably inhibits mating and meiosis by degrading a specific mRNA required for sexual development. In Schizosaccharomyces pombe (strain 972 / ATCC 24843) (Fission yeast), this protein is Double-strand-specific pac1 ribonuclease (pac1).